We begin with the raw amino-acid sequence, 510 residues long: NAD(P)H-quinone oxidoreductase subunit 2 B, chloroplastic (510 aa).

13 helical membrane-spanning segments follow: residues 24–44 (LLLF…GLIL), 59–79 (WFYF…LFRW), 99–119 (IFQF…VEYI), 124–144 (MAIT…MFLC), 149–169 (LITI…LSGY), 184–204 (LLMG…LYGL), 229–249 (ISIA…LAPF), 262–284 (TPVV…TRIF), 295–315 (WHLL…LIAI), 323–343 (MLAY…IVGD), 354–374 (YMLF…LFGL), 395–415 (ALSL…AGFF), and 418–438 (LHLF…IGLL).

The protein belongs to the complex I subunit 2 family. As to quaternary structure, NDH is composed of at least 16 different subunits, 5 of which are encoded in the nucleus.

It is found in the plastid. Its subcellular location is the chloroplast thylakoid membrane. The enzyme catalyses a plastoquinone + NADH + (n+1) H(+)(in) = a plastoquinol + NAD(+) + n H(+)(out). It catalyses the reaction a plastoquinone + NADPH + (n+1) H(+)(in) = a plastoquinol + NADP(+) + n H(+)(out). NDH shuttles electrons from NAD(P)H:plastoquinone, via FMN and iron-sulfur (Fe-S) centers, to quinones in the photosynthetic chain and possibly in a chloroplast respiratory chain. The immediate electron acceptor for the enzyme in this species is believed to be plastoquinone. Couples the redox reaction to proton translocation, and thus conserves the redox energy in a proton gradient. The sequence is that of NAD(P)H-quinone oxidoreductase subunit 2 B, chloroplastic from Lemna minor (Common duckweed).